The primary structure comprises 444 residues: Putative zinc metalloprotease PD_0327 (444 aa).

H22 contacts Zn(2+). Residue E23 is part of the active site. H26 is a Zn(2+) binding site. The chain crosses the membrane as a helical span at residues 98–120 (IAIVAAGPLANLLLCMLLLWVLF). Residues 192-278 (TLELSKLKQP…HPGMIEIRRG (87 aa)) enclose the PDZ domain. Helical transmembrane passes span 371–393 (VGWF…LFPI) and 418–440 (AMAA…AFYN).

This sequence belongs to the peptidase M50B family. It depends on Zn(2+) as a cofactor.

It is found in the cell inner membrane. The sequence is that of Putative zinc metalloprotease PD_0327 from Xylella fastidiosa (strain Temecula1 / ATCC 700964).